A 614-amino-acid chain; its full sequence is Phosphomethylpyrimidine synthase (614 aa).

Positions 1–16 (MNAQLSALQQQAQQLS) are enriched in low complexity. The interval 1 to 36 (MNAQLSALQQQAQQLSESVTRPIPGSRKIHVPGSRP) is disordered. Residues Asn-230, Met-259, Tyr-288, His-324, 344 to 346 (SRG), 385 to 388 (DGLR), and Glu-424 contribute to the substrate site. Position 428 (His-428) interacts with Zn(2+). Tyr-451 serves as a coordination point for substrate. Residue His-492 participates in Zn(2+) binding. [4Fe-4S] cluster-binding residues include Cys-572, Cys-575, and Cys-580.

It belongs to the ThiC family. As to quaternary structure, homodimer. [4Fe-4S] cluster is required as a cofactor.

The enzyme catalyses 5-amino-1-(5-phospho-beta-D-ribosyl)imidazole + S-adenosyl-L-methionine = 4-amino-2-methyl-5-(phosphooxymethyl)pyrimidine + CO + 5'-deoxyadenosine + formate + L-methionine + 3 H(+). Its pathway is cofactor biosynthesis; thiamine diphosphate biosynthesis. Catalyzes the synthesis of the hydroxymethylpyrimidine phosphate (HMP-P) moiety of thiamine from aminoimidazole ribotide (AIR) in a radical S-adenosyl-L-methionine (SAM)-dependent reaction. The chain is Phosphomethylpyrimidine synthase from Stenotrophomonas maltophilia (strain R551-3).